Consider the following 106-residue polypeptide: ATPase inhibitor, mitochondrial (106 aa).

The transit peptide at 1-25 directs the protein to the mitochondrion; that stretch reads MAGSALAVRARFGVWGMKVLQTRGF. Positions 26-52 are N-terminal inhibitory region; it reads VSDSSDSMDTGAGSIREAGGAFGKREK. The segment at 26–58 is disordered; sequence VSDSSDSMDTGAGSIREAGGAFGKREKAEEDRY. A Phosphoserine modification is found at S39. The span at 48 to 58 shows a compositional bias: basic and acidic residues; it reads GKREKAEEDRY. Residues 60–106 adopt a coiled-coil conformation; it reads REKTKEQLAALRKHHEDEIDHHSKEIERLQKQIERHKKKIQQLKNNH. Positions 74–106 are antiparallel alpha-helical coiled coil region; the sequence is HEDEIDHHSKEIERLQKQIERHKKKIQQLKNNH. K103 is subject to N6-succinyllysine.

The protein belongs to the ATPase inhibitor family. Homodimer; represents the active form and is present at a pH value below 6.5. Homotetramer; represents the inactive form and is present at a pH value above 7.0.

It is found in the mitochondrion. Functionally, endogenous F(1)F(o)-ATPase inhibitor limiting ATP depletion when the mitochondrial membrane potential falls below a threshold and the F(1)F(o)-ATP synthase starts hydrolyzing ATP to pump protons out of the mitochondrial matrix. Required to avoid the consumption of cellular ATP when the F(1)F(o)-ATP synthase enzyme acts as an ATP hydrolase. Indirectly acts as a regulator of heme synthesis in erythroid tissues: regulates heme synthesis by modulating the mitochondrial pH and redox potential, allowing FECH to efficiently catalyze the incorporation of iron into protoporphyrin IX to produce heme. This Mus musculus (Mouse) protein is ATPase inhibitor, mitochondrial.